The chain runs to 613 residues: Ribosome-associated molecular chaperone SSB (613 aa).

A nucleotide binding domain (NBD) region spans residues 1–391; the sequence is MADGVFQGAI…ILTGQSTSDE (391 aa). ATP-binding positions include 16–18, K73, 205–207, 271–278, and G342; these read TTY, GGT, and ERAKRTLS. The interval 392-402 is inter-domain linker; that stretch reads TKDLLLLDVAP. Positions 403 to 613 are substrate binding domain (SBD); the sequence is LSLGVGMQGD…RVVTKAMSSR (211 aa). Residues 516–612 are lid domain (SBDalpha); it reads SEDIEKMVNQ…KRVVTKAMSS (97 aa). The Nuclear export signal motif lies at 574–582; sequence IEAALADAL.

This sequence belongs to the heat shock protein 70 family. Ssb-type Hsp70 subfamily. In terms of assembly, binds to ribosomes. Binds close to the ribosomal tunnel exit via contacts with both ribosomal proteins and rRNA. Directly interacts with nascent polypeptides. This interaction is dependent on the ribosome-associated complex (RAC). Interacts with SSE1. Interacts with FES1.

It localises to the cytoplasm. The enzyme catalyses ATP + H2O = ADP + phosphate + H(+). In terms of biological role, ribosome-bound, Hsp70-type chaperone that assists in the cotranslational folding of newly synthesized proteins in the cytosol. Stimulates folding by interacting with nascent chains, binding to short, largely hydrophobic sequences exposed by unfolded proteins, thereby stabilizing longer, more slowly translated, and aggregation-prone nascent polypeptides and domains that cannot fold stably until fully synthesized. The Hsp70-protein substrate interaction depends on ATP-binding and on allosteric regulation between the NBD and the SBD. The ATP-bound state is characterized by a fast exchange rate of substrate (low affinity state), while in the ADP-bound state exchange is much slower (high affinity state). During the Hsp70 cycle, the chaperone switches between the ATP-bound state (open conformation) and the ADP-bound state (closed conformation) by major conformational rearrangements involving mainly the lid domain. Ssb cooperates with a specific Hsp40/Hsp70 co-chaperone termed the ribosome-associated complex (RAC), which stimulates the ATPase activity of the ribosome-associated pool of Ssbs and switches it to the high affinity substrate binding state. Hsp110 chaperone SSE1 and FES1 act as nucleotide exchange factors that cause substrate release. This is Ribosome-associated molecular chaperone SSB (SSB1) from Candida glabrata (strain ATCC 2001 / BCRC 20586 / JCM 3761 / NBRC 0622 / NRRL Y-65 / CBS 138) (Yeast).